The chain runs to 412 residues: [Pyruvate dehydrogenase (acetyl-transferring)] kinase isozyme 4, mitochondrial (412 aa).

Positions 138 to 368 (ILEYKDNCTV…DAIIYLKALS (231 aa)) constitute a Histidine kinase domain. ATP is bound by residues 254-261 (ELFKNAMR), Asp293, 312-313 (ST), and 329-334 (GFGYGL).

This sequence belongs to the PDK/BCKDK protein kinase family. As to quaternary structure, homodimer. Interacts with the pyruvate dehydrogenase complex subunit DLAT, and is part of the multimeric pyruvate dehydrogenase complex that contains multiple copies of pyruvate dehydrogenase (E1), dihydrolipoamide acetyltransferase (DLAT, E2) and lipoamide dehydrogenase (DLD, E3). In terms of tissue distribution, ubiquitous; highest levels of expression in heart and skeletal muscle.

It is found in the mitochondrion matrix. The catalysed reaction is L-seryl-[pyruvate dehydrogenase E1 alpha subunit] + ATP = O-phospho-L-seryl-[pyruvate dehydrogenase E1 alpha subunit] + ADP + H(+). In terms of biological role, kinase that plays a key role in regulation of glucose and fatty acid metabolism and homeostasis via phosphorylation of the pyruvate dehydrogenase subunits PDHA1 and PDHA2. This inhibits pyruvate dehydrogenase activity, and thereby regulates metabolite flux through the tricarboxylic acid cycle, down-regulates aerobic respiration and inhibits the formation of acetyl-coenzyme A from pyruvate. Inhibition of pyruvate dehydrogenase decreases glucose utilization and increases fat metabolism in response to prolonged fasting and starvation. Plays an important role in maintaining normal blood glucose levels under starvation, and is involved in the insulin signaling cascade. Via its regulation of pyruvate dehydrogenase activity, plays an important role in maintaining normal blood pH and in preventing the accumulation of ketone bodies under starvation. In the fed state, mediates cellular responses to glucose levels and to a high-fat diet. Regulates both fatty acid oxidation and de novo fatty acid biosynthesis. Plays a role in the generation of reactive oxygen species. Protects detached epithelial cells against anoikis. Plays a role in cell proliferation via its role in regulating carbohydrate and fatty acid metabolism. In Rattus norvegicus (Rat), this protein is [Pyruvate dehydrogenase (acetyl-transferring)] kinase isozyme 4, mitochondrial (Pdk4).